Here is a 426-residue protein sequence, read N- to C-terminus: Serine--tRNA ligase (426 aa).

Residue 233–235 (TAE) coordinates L-serine. 264–266 (RSE) lines the ATP pocket. Glutamate 287 contacts L-serine. 351-354 (EISS) is an ATP binding site. Serine 387 contacts L-serine.

It belongs to the class-II aminoacyl-tRNA synthetase family. Type-1 seryl-tRNA synthetase subfamily. In terms of assembly, homodimer. The tRNA molecule binds across the dimer.

Its subcellular location is the cytoplasm. The enzyme catalyses tRNA(Ser) + L-serine + ATP = L-seryl-tRNA(Ser) + AMP + diphosphate + H(+). It catalyses the reaction tRNA(Sec) + L-serine + ATP = L-seryl-tRNA(Sec) + AMP + diphosphate + H(+). It participates in aminoacyl-tRNA biosynthesis; selenocysteinyl-tRNA(Sec) biosynthesis; L-seryl-tRNA(Sec) from L-serine and tRNA(Sec): step 1/1. Functionally, catalyzes the attachment of serine to tRNA(Ser). Is also able to aminoacylate tRNA(Sec) with serine, to form the misacylated tRNA L-seryl-tRNA(Sec), which will be further converted into selenocysteinyl-tRNA(Sec). The chain is Serine--tRNA ligase from Pseudomonas putida (strain ATCC 700007 / DSM 6899 / JCM 31910 / BCRC 17059 / LMG 24140 / F1).